The sequence spans 474 residues: mRNA cap guanine-N(7) methyltransferase (474 aa).

The segment covering 1–12 (MSTDSYTPSQEP) has biased composition (polar residues). The tract at residues 1 to 106 (MSTDSYTPSQ…GHEGDEGDED (106 aa)) is disordered. Basic and acidic residues predominate over residues 56 to 100 (SDIDGKYDKYGERRNAHTTTRDSRLDRLKRVRQKSAEREDVGHEG). Residues 170–474 (SPIYKMRNFN…FYIGFVFEKV (305 aa)) enclose the mRNA cap 0 methyltransferase domain. Position 179–180 (179–180 (NN)) interacts with mRNA. 6 residues coordinate S-adenosyl-L-methionine: Lys-183, Cys-207, Asp-229, Asp-269, Gln-299, and Tyr-304.

This sequence belongs to the class I-like SAM-binding methyltransferase superfamily. mRNA cap 0 methyltransferase family.

It localises to the nucleus. The enzyme catalyses a 5'-end (5'-triphosphoguanosine)-ribonucleoside in mRNA + S-adenosyl-L-methionine = a 5'-end (N(7)-methyl 5'-triphosphoguanosine)-ribonucleoside in mRNA + S-adenosyl-L-homocysteine. Responsible for methylating the 5'-cap structure of mRNAs. This chain is mRNA cap guanine-N(7) methyltransferase (ABD1), found in Candida albicans (strain SC5314 / ATCC MYA-2876) (Yeast).